We begin with the raw amino-acid sequence, 123 residues long: Large ribosomal subunit protein uL18 (123 aa).

This sequence belongs to the universal ribosomal protein uL18 family. Part of the 50S ribosomal subunit; part of the 5S rRNA/L5/L18/L25 subcomplex. Contacts the 5S and 23S rRNAs.

Its function is as follows. This is one of the proteins that bind and probably mediate the attachment of the 5S RNA into the large ribosomal subunit, where it forms part of the central protuberance. This is Large ribosomal subunit protein uL18 from Desulforudis audaxviator (strain MP104C).